Here is a 317-residue protein sequence, read N- to C-terminus: Inositol oxygenase 2 (317 aa).

Substrate contacts are provided by residues R57 and 115-117 (DES). Fe cation is bound by residues H128, H153, and D154. Substrate contacts are provided by residues K157 and 174 to 175 (GD). 3 residues coordinate Fe cation: H226, H252, and D285. 252–253 (HS) lines the substrate pocket.

Belongs to the myo-inositol oxygenase family. Requires Fe cation as cofactor. As to expression, expressed mainly in roots, stems, flowers and siliques. Low expression in leaves.

The protein localises to the cytoplasm. It carries out the reaction myo-inositol + O2 = D-glucuronate + H2O + H(+). Its pathway is polyol metabolism; myo-inositol degradation into D-glucuronate; D-glucuronate from myo-inositol: step 1/1. Functionally, involved in the biosynthesis of UDP-glucuronic acid (UDP-GlcA), providing nucleotide sugars for cell-wall polymers. May be also involved in plant ascorbate biosynthesis. The sequence is that of Inositol oxygenase 2 (MIOX2) from Arabidopsis thaliana (Mouse-ear cress).